Reading from the N-terminus, the 466-residue chain is GVGFKAGVKDYKLTYYTPDYQTQDTDILAAFRVTPQPGVPPEEAGAAVAAESSTGTWTTVWTDGLTSLDRYKGRCYHIEPVAGEENQFIAYVAYPLDLFEEGSVTNMFTSIVGNVFGFKALRALRLEDLRIPPAYTKTFQGPPHGIQVERDKLNKYGRPLLGCTIKPKLGLSAKNYGRAVYECLRGGLDFTKDDENVNSQPFMRWRDRFLFCAEAIYKAQAETGEIKGHYLNATAGTCEEMIKRAVFARELGVPIVMHDYLTGGFTANTSLAHYCRDNGLLLHIHRAMHAVIDRQKNHGIHFRVLAKALRLSGGDHIHSGTVVGKLEGEREITLGFVDLLRDDNTEKDRSRGIYFTQSWVSLPGVLPVASGGIHVWHMPALTEIFGDDSVLQFGGGTLGHPWGNPPGAVANRVALEACVQARNEGRDLAREGNEIIREASKWSPELAAACEVWKEIKFEFPAMDTL.

At lysine 5 the chain carries N6,N6,N6-trimethyllysine. Substrate is bound by residues asparagine 114 and threonine 164. Residue lysine 166 is the Proton acceptor of the active site. Lysine 168 lines the substrate pocket. Mg(2+)-binding residues include lysine 192, aspartate 194, and glutamate 195. Lysine 192 carries the post-translational modification N6-carboxylysine. The active-site Proton acceptor is histidine 285. 3 residues coordinate substrate: arginine 286, histidine 318, and serine 370.

Belongs to the RuBisCO large chain family. Type I subfamily. As to quaternary structure, heterohexadecamer of 8 large chains and 8 small chains; disulfide-linked. The disulfide link is formed within the large subunit homodimers. Requires Mg(2+) as cofactor. In terms of processing, the disulfide bond which can form in the large chain dimeric partners within the hexadecamer appears to be associated with oxidative stress and protein turnover.

Its subcellular location is the plastid. It is found in the chloroplast. The enzyme catalyses 2 (2R)-3-phosphoglycerate + 2 H(+) = D-ribulose 1,5-bisphosphate + CO2 + H2O. The catalysed reaction is D-ribulose 1,5-bisphosphate + O2 = 2-phosphoglycolate + (2R)-3-phosphoglycerate + 2 H(+). RuBisCO catalyzes two reactions: the carboxylation of D-ribulose 1,5-bisphosphate, the primary event in carbon dioxide fixation, as well as the oxidative fragmentation of the pentose substrate in the photorespiration process. Both reactions occur simultaneously and in competition at the same active site. In Drosophyllum lusitanicum (Portuguese sundew), this protein is Ribulose bisphosphate carboxylase large chain.